The following is a 148-amino-acid chain: MELDALDRKILEILLKDSRTSYREIAKDLNVAVGTIYNRIKKLEDSGVIQAFTVKLNYESIGYDLTAIIGIKAQGKKIREIERIIAKDKRVTCVYDVTGEYDIIVIAKFRNREDMNRFVKGVLSIDGVEKTNTHVVLEIVKEDFRLEP.

The 62-residue stretch at 3–64 (LDALDRKILE…KLNYESIGYD (62 aa)) folds into the HTH asnC-type domain. Positions 22-41 (YREIAKDLNVAVGTIYNRIK) form a DNA-binding region, H-T-H motif.

This is an uncharacterized protein from Pyrococcus horikoshii (strain ATCC 700860 / DSM 12428 / JCM 9974 / NBRC 100139 / OT-3).